Consider the following 573-residue polypeptide: Dilute domain-containing protein SPAC25B8.08 (573 aa).

The Dilute domain maps to 180-464 (NAFLCEVNQV…LKKLDAFHEE (285 aa)).

The protein resides in the cytoplasm. Its subcellular location is the golgi apparatus. The polypeptide is Dilute domain-containing protein SPAC25B8.08 (Schizosaccharomyces pombe (strain 972 / ATCC 24843) (Fission yeast)).